The chain runs to 192 residues: NADH-quinone oxidoreductase subunit B 1 (192 aa).

4 residues coordinate [4Fe-4S] cluster: Cys-71, Cys-72, Cys-136, and Cys-166.

This sequence belongs to the complex I 20 kDa subunit family. NDH-1 is composed of 14 different subunits. Subunits NuoB, C, D, E, F, and G constitute the peripheral sector of the complex. Requires [4Fe-4S] cluster as cofactor.

Its subcellular location is the cell inner membrane. The enzyme catalyses a quinone + NADH + 5 H(+)(in) = a quinol + NAD(+) + 4 H(+)(out). In terms of biological role, NDH-1 shuttles electrons from NADH, via FMN and iron-sulfur (Fe-S) centers, to quinones in the respiratory chain. The immediate electron acceptor for the enzyme in this species is believed to be ubiquinone. Couples the redox reaction to proton translocation (for every two electrons transferred, four hydrogen ions are translocated across the cytoplasmic membrane), and thus conserves the redox energy in a proton gradient. This is NADH-quinone oxidoreductase subunit B 1 from Rhizobium meliloti (strain 1021) (Ensifer meliloti).